The following is a 247-amino-acid chain: uncharacterized protein (247 aa).

3 helical membrane-spanning segments follow: residues 108-128 (WYIN…FLII), 136-156 (IFSV…NIIC), and 194-214 (GAKL…LFFI).

The protein resides in the membrane. This is an uncharacterized protein from Caenorhabditis elegans.